The chain runs to 153 residues: MEKLDSLNEAFKSLLREEKFGSQSEIVTALQEMGFEHINQSKVSRMLSKFGAVRTRNTKMEMVYHLPAELGIPTTSSPLRNLVIDIDHNESLIVVRTSPGAAQLIARLLDSMGKAEGILGTIAGDDTIFITPTRDTSISTLIATITELFDSSL.

It belongs to the ArgR family.

The protein resides in the cytoplasm. It functions in the pathway amino-acid biosynthesis; L-arginine biosynthesis [regulation]. Its function is as follows. Regulates arginine biosynthesis genes. This chain is Arginine repressor, found in Glaesserella parasuis serovar 5 (strain SH0165) (Haemophilus parasuis).